Here is a 264-residue protein sequence, read N- to C-terminus: Thiazole synthase (264 aa).

The active-site Schiff-base intermediate with DXP is lysine 106. 1-deoxy-D-xylulose 5-phosphate is bound by residues glycine 167, 193–194, and 215–216; these read AG and NT.

This sequence belongs to the ThiG family. As to quaternary structure, homotetramer. Forms heterodimers with either ThiH or ThiS.

The protein localises to the cytoplasm. It catalyses the reaction [ThiS sulfur-carrier protein]-C-terminal-Gly-aminoethanethioate + 2-iminoacetate + 1-deoxy-D-xylulose 5-phosphate = [ThiS sulfur-carrier protein]-C-terminal Gly-Gly + 2-[(2R,5Z)-2-carboxy-4-methylthiazol-5(2H)-ylidene]ethyl phosphate + 2 H2O + H(+). It participates in cofactor biosynthesis; thiamine diphosphate biosynthesis. Its function is as follows. Catalyzes the rearrangement of 1-deoxy-D-xylulose 5-phosphate (DXP) to produce the thiazole phosphate moiety of thiamine. Sulfur is provided by the thiocarboxylate moiety of the carrier protein ThiS. In vitro, sulfur can be provided by H(2)S. The polypeptide is Thiazole synthase (Xylella fastidiosa (strain Temecula1 / ATCC 700964)).